Reading from the N-terminus, the 954-residue chain is Chromosomal passenger complex protein BIR1 (954 aa).

2 BIR repeats span residues R20–Y117 and R153–Q241. Zn(2+)-binding residues include C208, C211, H228, and C237. The interval N375–K419 is disordered. Basic residues predominate over residues I385–P396. 3 positions are modified to phosphoserine: S477, S508, and S552. Disordered stretches follow at residues D541–V645 and F661–P685. The segment covering P556–T583 has biased composition (basic and acidic residues). The residue at position 587 (S587) is a Phosphoserine. Polar residues predominate over residues S593–T604. Phosphoserine is present on residues S751 and S765. Residues L798 to K839 are disordered. Residues S809–T818 show a composition bias toward basic and acidic residues. Polar residues predominate over residues S819–G835.

As to quaternary structure, component of the CPC complex at least composed of IPL1, BIR1 and SLI15. Interacts with CBF2/NDC10. Interacts with CBF3D/SKP1.

Component of the chromosomal passenger complex (CPC), a complex that acts as a key regulator of chromosome segregation and cytokinesis. The polypeptide is Chromosomal passenger complex protein BIR1 (BIR1) (Saccharomyces cerevisiae (strain ATCC 204508 / S288c) (Baker's yeast)).